The sequence spans 472 residues: Glutamate synthase [NADPH] small chain (472 aa).

One can recognise a 4Fe-4S ferredoxin-type domain in the interval 38–69; that stretch reads GQAKAQADRCLSCGNPYCEWKCPVHNYIPNWL. 4 residues coordinate [4Fe-4S] cluster: cysteine 47, cysteine 50, cysteine 55, and cysteine 59.

Aggregate of 4 catalytic active heterodimers, consisting of a large and a small subunit. [4Fe-4S] cluster is required as a cofactor.

The enzyme catalyses 2 L-glutamate + NADP(+) = L-glutamine + 2-oxoglutarate + NADPH + H(+). It functions in the pathway amino-acid biosynthesis; L-glutamate biosynthesis via GLT pathway; L-glutamate from 2-oxoglutarate and L-glutamine (NADP(+) route): step 1/1. It participates in energy metabolism; nitrogen metabolism. In terms of biological role, catalyzes the conversion of L-glutamine and 2-oxoglutarate into two molecules of L-glutamate. The polypeptide is Glutamate synthase [NADPH] small chain (gltD) (Escherichia coli (strain K12)).